The sequence spans 137 residues: Nucleoside diphosphate kinase (137 aa).

Residues lysine 10, phenylalanine 59, arginine 87, threonine 93, arginine 104, and asparagine 114 each contribute to the ATP site. Residue histidine 117 is the Pros-phosphohistidine intermediate of the active site.

The protein belongs to the NDK family. As to quaternary structure, homotetramer. Mg(2+) serves as cofactor.

It is found in the cytoplasm. It carries out the reaction a 2'-deoxyribonucleoside 5'-diphosphate + ATP = a 2'-deoxyribonucleoside 5'-triphosphate + ADP. The catalysed reaction is a ribonucleoside 5'-diphosphate + ATP = a ribonucleoside 5'-triphosphate + ADP. Functionally, major role in the synthesis of nucleoside triphosphates other than ATP. The ATP gamma phosphate is transferred to the NDP beta phosphate via a ping-pong mechanism, using a phosphorylated active-site intermediate. This Streptomyces griseus subsp. griseus (strain JCM 4626 / CBS 651.72 / NBRC 13350 / KCC S-0626 / ISP 5235) protein is Nucleoside diphosphate kinase.